An 87-amino-acid polypeptide reads, in one-letter code: Retinal rod rhodopsin-sensitive cGMP 3',5'-cyclic phosphodiesterase subunit gamma (87 aa).

Met1 carries the post-translational modification N-acetylmethionine. Residues 1-12 show a composition bias toward basic and acidic residues; it reads MNLEPPKGEIRS. A disordered region spans residues 1 to 55; sequence MNLEPPKGEIRSATRVIGGPVTPRKGPPKFKQRQTRQFKSKPPKKGVQGFGDDIP. Residues 26–44 show a composition bias toward basic residues; it reads GPPKFKQRQTRQFKSKPPK.

It belongs to the rod/cone cGMP-PDE gamma subunit family. As to quaternary structure, oligomer composed of two catalytic chains (alpha and beta), an inhibitory chain (gamma) and the delta chain.

The catalysed reaction is 3',5'-cyclic GMP + H2O = GMP + H(+). Participates in processes of transmission and amplification of the visual signal. cGMP-PDEs are the effector molecules in G-protein-mediated phototransduction in vertebrate rods and cones. The chain is Retinal rod rhodopsin-sensitive cGMP 3',5'-cyclic phosphodiesterase subunit gamma (Pde6g) from Mus musculus (Mouse).